A 230-amino-acid polypeptide reads, in one-letter code: UPF0173 metal-dependent hydrolase RHOS4_08540 (230 aa).

Belongs to the UPF0173 family.

In Cereibacter sphaeroides (strain ATCC 17023 / DSM 158 / JCM 6121 / CCUG 31486 / LMG 2827 / NBRC 12203 / NCIMB 8253 / ATH 2.4.1.) (Rhodobacter sphaeroides), this protein is UPF0173 metal-dependent hydrolase RHOS4_08540.